Here is a 365-residue protein sequence, read N- to C-terminus: 7-methylxanthine methyltransferase PCS1 (365 aa).

Residue Tyr19 participates in S-adenosyl-L-homocysteine binding. Caffeine is bound at residue Thr26. S-adenosyl-L-homocysteine is bound by residues Cys62, Asn67, Asp99, Leu100, Ser134, and Phe135. 3 residues coordinate caffeine: Tyr152, His155, and Trp156. Mg(2+) is bound at residue Asn173. His221 serves as a coordination point for caffeine. Asp259, Phe261, and Asn262 together coordinate Mg(2+). Phe317 is a binding site for caffeine.

It belongs to the methyltransferase superfamily. Type-7 methyltransferase family. It depends on Mg(2+) as a cofactor.

The catalysed reaction is 1,7-dimethylxanthine + S-adenosyl-L-methionine = caffeine + S-adenosyl-L-homocysteine + H(+). The enzyme catalyses 7-methylxanthine + S-adenosyl-L-methionine = theobromine + S-adenosyl-L-homocysteine + H(+). It functions in the pathway alkaloid biosynthesis. Functionally, involved in the biosynthesis of caffeine. Catalyzes the conversion of 7-methylxanthine (7mX) to theobromine, and, to some extent, the conversion of paraxanthine to caffeine, but seems not able to convert theobromine to caffeine. The chain is 7-methylxanthine methyltransferase PCS1 from Camellia ptilophylla (Cocoa tea).